The primary structure comprises 134 residues: DNA-binding protein H-NS (134 aa).

Residues 111-116 (QGRTLA) mediate DNA binding.

This sequence belongs to the histone-like protein H-NS family. As to quaternary structure, homodimer that oligomerizes on DNA into higher-order complexes that form bridges between disparate regions of DNA compacting it. Interacts with YmoA and other similar proteins.

Its subcellular location is the cytoplasm. It localises to the nucleoid. Its function is as follows. A DNA-binding protein implicated in transcriptional repression and chromosome organization and compaction. Binds nucleation sites in AT-rich DNA and bridges them, forming higher-order nucleoprotein complexes and condensing the chromosome. As many horizontally transferred genes are AT-rich, it plays a central role in silencing foreign genes. A subset of genes are repressed by H-NS in association with other proteins. The chain is DNA-binding protein H-NS (hns) from Proteus vulgaris.